The following is a 217-amino-acid chain: Nitrile hydratase subunit beta (217 aa).

This sequence belongs to the nitrile hydratase subunit beta family. As to quaternary structure, heterodimer of an alpha and a beta chain.

The catalysed reaction is an aliphatic primary amide = an aliphatic nitrile + H2O. NHase catalyzes the hydration of various nitrile compounds to the corresponding amides. The protein is Nitrile hydratase subunit beta (nthB) of Pseudomonas putida (Arthrobacter siderocapsulatus).